Consider the following 365-residue polypeptide: uncharacterized protein (365 aa).

In terms of domain architecture, Radical SAM core spans 45 to 289 (FSIGKSLTII…LKEVKKSNPK (245 aa)). Residues C60, C68, and C71 each contribute to the [4Fe-4S] cluster site.

The cofactor is [4Fe-4S] cluster.

This is an uncharacterized protein from Methanocaldococcus jannaschii (strain ATCC 43067 / DSM 2661 / JAL-1 / JCM 10045 / NBRC 100440) (Methanococcus jannaschii).